Consider the following 326-residue polypeptide: Transposase for insertion sequence element IS4351 (326 aa).

In terms of domain architecture, Integrase catalytic spans 156–317 (IDERPEIVEL…TPNEKFKQII (162 aa)).

It belongs to the transposase IS30 family.

In terms of biological role, required for the transposition of the insertion element. This chain is Transposase for insertion sequence element IS4351, found in Bacteroides fragilis.